The sequence spans 408 residues: Acetylornithine aminotransferase (408 aa).

Pyridoxal 5'-phosphate-binding positions include 107 to 108 and Phe-141; that span reads GT. Position 144 (Arg-144) interacts with N(2)-acetyl-L-ornithine. Pyridoxal 5'-phosphate is bound at residue 227-230; it reads DEIQ. At Lys-256 the chain carries N6-(pyridoxal phosphate)lysine. Thr-284 contributes to the N(2)-acetyl-L-ornithine binding site. Thr-285 is a pyridoxal 5'-phosphate binding site.

It belongs to the class-III pyridoxal-phosphate-dependent aminotransferase family. ArgD subfamily. As to quaternary structure, homodimer. It depends on pyridoxal 5'-phosphate as a cofactor.

Its subcellular location is the cytoplasm. It carries out the reaction N(2)-acetyl-L-ornithine + 2-oxoglutarate = N-acetyl-L-glutamate 5-semialdehyde + L-glutamate. It functions in the pathway amino-acid biosynthesis; L-arginine biosynthesis; N(2)-acetyl-L-ornithine from L-glutamate: step 4/4. This chain is Acetylornithine aminotransferase, found in Xanthomonas campestris pv. campestris (strain ATCC 33913 / DSM 3586 / NCPPB 528 / LMG 568 / P 25).